The sequence spans 238 residues: 1-(5-phosphoribosyl)-5-[(5-phosphoribosylamino)methylideneamino] imidazole-4-carboxamide isomerase (238 aa).

Asp-8 (proton acceptor) is an active-site residue. Asp-130 serves as the catalytic Proton donor.

It belongs to the HisA/HisF family.

The protein localises to the cytoplasm. It catalyses the reaction 1-(5-phospho-beta-D-ribosyl)-5-[(5-phospho-beta-D-ribosylamino)methylideneamino]imidazole-4-carboxamide = 5-[(5-phospho-1-deoxy-D-ribulos-1-ylimino)methylamino]-1-(5-phospho-beta-D-ribosyl)imidazole-4-carboxamide. Its pathway is amino-acid biosynthesis; L-histidine biosynthesis; L-histidine from 5-phospho-alpha-D-ribose 1-diphosphate: step 4/9. This is 1-(5-phosphoribosyl)-5-[(5-phosphoribosylamino)methylideneamino] imidazole-4-carboxamide isomerase from Methanococcus maripaludis (strain C7 / ATCC BAA-1331).